The primary structure comprises 326 residues: tRNA-modifying protein YgfZ (326 aa).

Residues Trp-27 and Trp-189 each contribute to the folate site.

The protein belongs to the tRNA-modifying YgfZ family.

The protein resides in the cytoplasm. Functionally, folate-binding protein involved in regulating the level of ATP-DnaA and in the modification of some tRNAs. It is probably a key factor in regulatory networks that act via tRNA modification, such as initiation of chromosomal replication. The protein is tRNA-modifying protein YgfZ of Escherichia coli (strain SMS-3-5 / SECEC).